Consider the following 132-residue polypeptide: Chemokine-like protein TAFA-5 (132 aa).

A signal peptide spans 1–43; that stretch reads MAPSPRTSSRQDATALPSMSSTFWAFMILASLLIAYCSQLAAG. N-linked (GlcNAc...) asparagine glycosylation occurs at Asn113.

It belongs to the TAFA family. Expressed in the subcutaneous, brown, epididymal and perirenal adipose tissue (at protein level).

It is found in the secreted. Functionally, acts as a chemokine-like protein by regulating cell proliferation and migration through activation of G protein-coupled receptors (GPCRs), such as S1PR2 and FPR2. Stimulates chemotactic migration of macrophages mediated by the MAPK3/ERK1 and AKT1 pathway. Blocks TNFSF11/RANKL-induced osteoclast formation from macrophages by inhibiting up-regulation of osteoclast fusogenic and differentiation genes. Stimulation of macrophage migration and inhibition of osteoclast formation is mediated through the GPCR FPR2. Acts as an adipokine by negatively regulating vascular smooth muscle cell (VSMC) proliferation and migration in response to platelet-derived growth factor stimulation via GPCR S1PR2 and G protein GNA12/GNA13-transmitted RHOA signaling. Inhibits injury-induced cell proliferation and neointima formation in the femoral arteries. The chain is Chemokine-like protein TAFA-5 (Tafa5) from Mus musculus (Mouse).